A 445-amino-acid polypeptide reads, in one-letter code: Gastrula zinc finger protein 5-1 (445 aa).

Residues 1 to 38 form a disordered region; sequence MLQIKTEKEELDCGDDQNPKESSAVPLTDGASPEPQPQ. At Ser89 the chain carries Phosphoserine; by CK2. Residues 185 to 210 form a C2H2-type 1; atypical zinc finger; it reads FICCKCGDSFAHHSDLHTHLYACAGH. 7 consecutive C2H2-type zinc fingers follow at residues 239-261, 267-289, 295-317, 323-345, 351-373, 379-401, and 407-429; these read FKCT…HRIH, FTCT…SRTH, YVCT…MRTH, YACK…QNSH, FICT…QRTH, FICS…QMIH, and FSCS…QRVH.

Binds to RNA homomers. In Xenopus laevis (African clawed frog), this protein is Gastrula zinc finger protein 5-1.